We begin with the raw amino-acid sequence, 131 residues long: Translation initiation factor 5A (131 aa).

Position 36 is a hypusine (lysine 36).

Belongs to the eIF-5A family.

The protein resides in the cytoplasm. In terms of biological role, functions by promoting the formation of the first peptide bond. The polypeptide is Translation initiation factor 5A (Sulfurisphaera tokodaii (strain DSM 16993 / JCM 10545 / NBRC 100140 / 7) (Sulfolobus tokodaii)).